The sequence spans 761 residues: Coenzyme PQQ synthesis protein F (761 aa).

Histidine 49 is a Zn(2+) binding site. The active-site Proton acceptor is the glutamate 52. Zn(2+) contacts are provided by histidine 53 and glutamate 130.

The protein belongs to the peptidase M16 family. Zn(2+) is required as a cofactor.

The protein operates within cofactor biosynthesis; pyrroloquinoline quinone biosynthesis. Its function is as follows. Required for coenzyme pyrroloquinoline quinone (PQQ) biosynthesis. It is thought that this protein is a protease that cleaves peptides bond in a small peptide (gene pqqA), providing the glutamate and tyrosine residues which are necessary for the synthesis of PQQ. This chain is Coenzyme PQQ synthesis protein F (pqqF), found in Klebsiella pneumoniae.